Reading from the N-terminus, the 1132-residue chain is MSTPLKVWQRWSTPTKATNPDSNGSSHGTGLDMVTPVSGRVSEIQFDDPRILPEKISELEKELFEYQHSMGLLLIEKKEWSSQYEALQQAFEEVNECLKQERNAHLIAIADVEKREEGLRKALGIEKQCALDLEKALKELRAENAEIKFTADSKLTEANALVRSVEEKSLEVEAKLRAVDAKLAEVSRKSSDVERKAKEVEARESSLQRERFSYIAEREADEATLSKQREDLREWERKLQEGEERVAKSQMIVKQREDRANESDKIIKQKGKELEEAQKKIDAANLAVKKLEDDVSSRIKDLALREQETDVLKKSIETKARELQALQEKLEAREKMAVQQLVDEHQAKLDSTQREFELEMEQKRKSIDDSLKSKVAEVEKREAEWKHMEEKVAKREQALDRKLEKHKEKENDFDLRLKGISGREKALKSEEKALETEKKKLLEDKEIILNLKALVEKVSGENQAQLSEINKEKDELRVTEEERSEYLRLQTELKEQIEKCRSQQELLQKEAEDLKAQRESFEKEWEELDERKAKIGNELKNITDQKEKLERHIHLEEERLKKEKQAANENMERELETLEVAKASFAETMEYERSMLSKKAESERSQLLHDIEMRKRKLESDMQTILEEKERELQAKKKLFEEEREKELSNINYLRDVARREMMDMQNERQRIEKEKLEVDSSKNHLEEQQTEIRKDVDDLVALTKKLKEQREQFISERSRFLSSMESNRNCSRCGELLSELVLPEIDNLEMPNMSKLANILDNEAPRQEMRDISPTAAGLGLPVTGGKVSWFRKCTSKMLKLSPIKMTEPSVTWNLADQEPQSTEQANVGGPSTTVQAATTYSFDVQKAESETGTKEVEVTNVNSDGDQSDINSKAQEVAADSLSNLDVDGQSRMKGKGKARTRRTRSVKDVVDDAKALYGESINLYEPNDSTENVDDSTKASTGETGRSDKAISKNGRKRGRVGSLRTCTTEQDGNESDGKSDSVTGGAHQRKRRQKVASEQQGEVVGQRYNLRRPRRVTGEPALSKKNEDIGGVQQEEGIHCTQATATASVGVAVSDNGVSTNVVQHEATADSEDTDAGSPKRTDESEAMSEDVNKTPLRADSDGEDDESDAEHPGKVSIGKKLWTFLTT.

Residues 1-31 form a disordered region; it reads MSTPLKVWQRWSTPTKATNPDSNGSSHGTGL. The span at 10–28 shows a compositional bias: polar residues; sequence RWSTPTKATNPDSNGSSHG. Residues 73-714 are a coiled coil; sequence LLIEKKEWSS…KKLKEQREQF (642 aa). Short sequence motifs (nuclear localization signal) lie at residues 379 to 386 and 693 to 700; these read EKREAEWK and IRKDVDDL. Residues Ser-774 and Ser-803 each carry the phosphoserine modification. A compositionally biased stretch (basic and acidic residues) spans 849–859; sequence AESETGTKEVE. 4 disordered regions span residues 849–871, 883–909, 924–1039, and 1061–1132; these read AESE…DQSD, SLSN…TRSV, INLY…VQQE, and GVST…FLTT. Polar residues predominate over residues 861 to 871; that stretch reads TNVNSDGDQSD. Ser-865 and Ser-883 each carry phosphoserine. Residues 895–907 are compositionally biased toward basic residues; it reads MKGKGKARTRRTR. Ser-908 is modified (phosphoserine). Ser-1093, Ser-1105, and Ser-1112 each carry phosphoserine. Positions 1095–1105 are enriched in basic and acidic residues; it reads DVNKTPLRADS.

This sequence belongs to the CRWN family. As to quaternary structure, core component of the LINC complex which is composed of inner nuclear membrane SUN domain-containing proteins coupled to outer nuclear membrane WIP and WIT proteins. The LINC complex also involves nucleoskeletal proteins CRWN/LINC and possibly KAKU4 and the cytoskeletal myosin KAKU1. Interacts with SUN1 and SUN2. Binds to KAKU4. In terms of tissue distribution, expressed at low levels in roots, leaves, flowers and flower stalks.

It localises to the nucleus membrane. Its subcellular location is the nucleus. The protein resides in the nucleoplasm. It is found in the nucleus lamina. Its function is as follows. Component of SUN-protein-containing multivariate complexes also called LINC complexes which link the nucleoskeleton and cytoskeleton by providing versatile outer nuclear membrane attachment sites for cytoskeletal filaments. Required for nucleus structure organization (e.g. size and shape). In Arabidopsis thaliana (Mouse-ear cress), this protein is Protein CROWDED NUCLEI 1.